Reading from the N-terminus, the 387-residue chain is Succinyl-diaminopimelate desuccinylase (387 aa).

Histidine 74 provides a ligand contact to Zn(2+). The active site involves aspartate 76. Residue aspartate 107 coordinates Zn(2+). Glutamate 142 (proton acceptor) is an active-site residue. Residues glutamate 143, glutamate 171, and histidine 360 each contribute to the Zn(2+) site.

Belongs to the peptidase M20A family. DapE subfamily. Homodimer. Zn(2+) is required as a cofactor. It depends on Co(2+) as a cofactor.

It catalyses the reaction N-succinyl-(2S,6S)-2,6-diaminopimelate + H2O = (2S,6S)-2,6-diaminopimelate + succinate. It functions in the pathway amino-acid biosynthesis; L-lysine biosynthesis via DAP pathway; LL-2,6-diaminopimelate from (S)-tetrahydrodipicolinate (succinylase route): step 3/3. Functionally, catalyzes the hydrolysis of N-succinyl-L,L-diaminopimelic acid (SDAP), forming succinate and LL-2,6-diaminopimelate (DAP), an intermediate involved in the bacterial biosynthesis of lysine and meso-diaminopimelic acid, an essential component of bacterial cell walls. The polypeptide is Succinyl-diaminopimelate desuccinylase (Rhodopseudomonas palustris (strain BisA53)).